The sequence spans 312 residues: Testis-expressed protein 13B (312 aa).

This sequence belongs to the TEX13 family. As to expression, testis specific.

This chain is Testis-expressed protein 13B (TEX13B), found in Homo sapiens (Human).